A 276-amino-acid polypeptide reads, in one-letter code: Large ribosomal subunit protein uL2 (276 aa).

2 disordered regions span residues 36-58 (PLHK…GGGH) and 214-276 (LGKR…RRKK).

Belongs to the universal ribosomal protein uL2 family. In terms of assembly, part of the 50S ribosomal subunit. Forms a bridge to the 30S subunit in the 70S ribosome.

One of the primary rRNA binding proteins. Required for association of the 30S and 50S subunits to form the 70S ribosome, for tRNA binding and peptide bond formation. It has been suggested to have peptidyltransferase activity; this is somewhat controversial. Makes several contacts with the 16S rRNA in the 70S ribosome. This chain is Large ribosomal subunit protein uL2, found in Halalkalibacterium halodurans (strain ATCC BAA-125 / DSM 18197 / FERM 7344 / JCM 9153 / C-125) (Bacillus halodurans).